A 129-amino-acid chain; its full sequence is Lysozyme C (129 aa).

A C-type lysozyme domain is found at 1-129 (KVYGRCELAA…VHAWIRGCRL (129 aa)). Intrachain disulfides connect Cys6–Cys127, Cys30–Cys115, Cys64–Cys80, and Cys76–Cys94. Residues Glu35 and Asp52 contribute to the active site.

This sequence belongs to the glycosyl hydrolase 22 family. As to quaternary structure, monomer.

It localises to the secreted. The catalysed reaction is Hydrolysis of (1-&gt;4)-beta-linkages between N-acetylmuramic acid and N-acetyl-D-glucosamine residues in a peptidoglycan and between N-acetyl-D-glucosamine residues in chitodextrins.. Its function is as follows. Lysozymes have primarily a bacteriolytic function; those in tissues and body fluids are associated with the monocyte-macrophage system and enhance the activity of immunoagents. The chain is Lysozyme C (LYZ) from Pavo cristatus (Indian peafowl).